A 99-amino-acid chain; its full sequence is Cell division protein FtsB (99 aa).

The Cytoplasmic portion of the chain corresponds to 1–3 (MKF). The chain crosses the membrane as a helical span at residues 4–21 (FVIALIVLLGLLQYRLWS). The Periplasmic segment spans residues 22–99 (GDNSLPEYFV…GDRSVSSPSQ (78 aa)). Residues 31–73 (VLQKQIAAQQEGNAKLNERNQVLKEEIIDLKSGTEAIEERARN) adopt a coiled-coil conformation.

The protein belongs to the FtsB family. As to quaternary structure, part of a complex composed of FtsB, FtsL and FtsQ.

The protein localises to the cell inner membrane. Functionally, essential cell division protein. May link together the upstream cell division proteins, which are predominantly cytoplasmic, with the downstream cell division proteins, which are predominantly periplasmic. The chain is Cell division protein FtsB from Shewanella sp. (strain ANA-3).